The chain runs to 125 residues: Succinate dehydrogenase cytochrome b560 subunit (125 aa).

Transmembrane regions (helical) follow at residues 29–49 (ISGV…KLAT), 68–88 (ILPW…INGI), and 104–124 (IIKD…FKFI). Residue His83 coordinates heme.

Belongs to the cytochrome b560 family. Forms part of complex II containing four subunits: a 70 kDa flavoprotein (FP), a 27 kDa iron-sulfur protein (IP), a cytochrome B and a membrane-anchoring protein. Requires heme as cofactor.

It is found in the mitochondrion inner membrane. Its pathway is carbohydrate metabolism; tricarboxylic acid cycle. Its function is as follows. Membrane-anchoring subunit of succinate dehydrogenase (SDH) that is involved in complex II of the mitochondrial electron transport chain and is responsible for transferring electrons from succinate to ubiquinone (coenzyme Q). This is Succinate dehydrogenase cytochrome b560 subunit (SDH3) from Porphyra purpurea (Red seaweed).